The chain runs to 545 residues: Membrane protein insertase YidC (545 aa).

The next 6 membrane-spanning stretches (helical) occupy residues 10–30 (AVYLSLFFIGIFMLLDDFLFS), 319–339 (LLYFLQVPMQLIMQIFYNVIP), 341–361 (WGLSIMFLTIVVRILIFPLTF), 407–427 (IGGCFPILLQLPVFFALYGLV), 467–487 (ILPFIMMITQLLSTIVSSNVS), and 502–522 (MPIMFFFILYDMPSGLLIYWI).

It belongs to the OXA1/ALB3/YidC family. Type 1 subfamily. Interacts with the Sec translocase complex via SecD. Specifically interacts with transmembrane segments of nascent integral membrane proteins during membrane integration.

The protein localises to the cell inner membrane. Its function is as follows. Required for the insertion and/or proper folding and/or complex formation of integral membrane proteins into the membrane. Involved in integration of membrane proteins that insert both dependently and independently of the Sec translocase complex, as well as at least some lipoproteins. Aids folding of multispanning membrane proteins. The sequence is that of Membrane protein insertase YidC from Borrelia duttonii (strain Ly).